A 213-amino-acid polypeptide reads, in one-letter code: Leucine-rich repeat protein 1 (213 aa).

The signal sequence occupies residues 1–21; the sequence is MGAGALGVVAMVAAAVVVAMA. LRR repeat units follow at residues 90-113, 115-137, 138-161, and 163-186; these read DHLQ…LGNL, NLIS…LGKL, TSLV…LAGI, and SLKV…PFEH.

Interacts with HIR1.

It localises to the early endosome membrane. The protein resides in the late endosome membrane. The protein localises to the cell membrane. In terms of biological role, involved in plant defense response. This Oryza sativa subsp. indica (Rice) protein is Leucine-rich repeat protein 1.